We begin with the raw amino-acid sequence, 311 residues long: Pyrimidine-specific ribonucleoside hydrolase RihA (311 aa).

His240 is an active-site residue.

This sequence belongs to the IUNH family. RihA subfamily.

In terms of biological role, hydrolyzes with equal efficiency cytidine or uridine to ribose and cytosine or uracil, respectively. In Escherichia coli (strain SMS-3-5 / SECEC), this protein is Pyrimidine-specific ribonucleoside hydrolase RihA.